The chain runs to 146 residues: Basic phospholipase A2 (146 aa).

A signal peptide spans 1 to 21 (MNPAHLLVLAAVCVSLLGASS). A propeptide spanning residues 22–27 (VPPRPL) is cleaved from the precursor. 7 disulfides stabilise this stretch: Cys38–Cys97, Cys52–Cys145, Cys54–Cys70, Cys69–Cys127, Cys76–Cys120, Cys86–Cys113, and Cys106–Cys118. Residues Tyr53, Gly55, and Gly57 each contribute to the Ca(2+) site. His73 is a catalytic residue. Ca(2+) is bound at residue Asp74. Asn109 carries N-linked (GlcNAc...) asparagine glycosylation. Asp121 is a catalytic residue.

It belongs to the phospholipase A2 family. Group I subfamily. D49 sub-subfamily. Requires Ca(2+) as cofactor. As to expression, expressed by the venom gland.

It localises to the secreted. The enzyme catalyses a 1,2-diacyl-sn-glycero-3-phosphocholine + H2O = a 1-acyl-sn-glycero-3-phosphocholine + a fatty acid + H(+). PLA2 catalyzes the calcium-dependent hydrolysis of the 2-acyl groups in 3-sn-phosphoglycerides. The polypeptide is Basic phospholipase A2 (Micrurus corallinus (Brazilian coral snake)).